The primary structure comprises 80 residues: Acyl carrier protein (80 aa).

Residues 4 to 79 (EAILEKVRSI…DAVKYIEDKQ (76 aa)) form the Carrier domain. O-(pantetheine 4'-phosphoryl)serine is present on Ser-39.

The protein belongs to the acyl carrier protein (ACP) family. In terms of processing, 4'-phosphopantetheine is transferred from CoA to a specific serine of apo-ACP by AcpS. This modification is essential for activity because fatty acids are bound in thioester linkage to the sulfhydryl of the prosthetic group.

Its subcellular location is the cytoplasm. It functions in the pathway lipid metabolism; fatty acid biosynthesis. Functionally, carrier of the growing fatty acid chain in fatty acid biosynthesis. This Prochlorococcus marinus (strain MIT 9313) protein is Acyl carrier protein.